The primary structure comprises 158 residues: NAD(P)H-quinone oxidoreductase subunit J, chloroplastic (158 aa).

Belongs to the complex I 30 kDa subunit family. NDH is composed of at least 16 different subunits, 5 of which are encoded in the nucleus.

It is found in the plastid. The protein resides in the chloroplast thylakoid membrane. It carries out the reaction a plastoquinone + NADH + (n+1) H(+)(in) = a plastoquinol + NAD(+) + n H(+)(out). The catalysed reaction is a plastoquinone + NADPH + (n+1) H(+)(in) = a plastoquinol + NADP(+) + n H(+)(out). Its function is as follows. NDH shuttles electrons from NAD(P)H:plastoquinone, via FMN and iron-sulfur (Fe-S) centers, to quinones in the photosynthetic chain and possibly in a chloroplast respiratory chain. The immediate electron acceptor for the enzyme in this species is believed to be plastoquinone. Couples the redox reaction to proton translocation, and thus conserves the redox energy in a proton gradient. The protein is NAD(P)H-quinone oxidoreductase subunit J, chloroplastic of Amborella trichopoda.